We begin with the raw amino-acid sequence, 166 residues long: UPF0304 protein VF_1794 (166 aa).

This sequence belongs to the UPF0304 family.

In Aliivibrio fischeri (strain ATCC 700601 / ES114) (Vibrio fischeri), this protein is UPF0304 protein VF_1794.